A 118-amino-acid polypeptide reads, in one-letter code: MIGGDSVEAIERRLLAKYPEGSPSAEIIEMARIEAEDLFEIKAQIIQRMALYDPTGDWMARGARALDNPRTTSGEESLERLYDIWKDLQETGPLSDEFSRLQEKVFLKKGGPGGDPIA.

It is found in the mitochondrion. This is an uncharacterized protein from Arabidopsis thaliana (Mouse-ear cress).